The sequence spans 225 residues: Ureidoacrylate amidohydrolase RutB (225 aa).

D22 acts as the Proton acceptor in catalysis. K131 is an active-site residue. C164 acts as the Nucleophile in catalysis.

The protein belongs to the isochorismatase family. RutB subfamily.

The catalysed reaction is (Z)-3-ureidoacrylate + H2O + H(+) = (Z)-3-aminoacrylate + NH4(+) + CO2. It catalyses the reaction (Z)-3-ureidoacrylate + H2O = (Z)-3-aminoacrylate + carbamate + H(+). It carries out the reaction (Z)-2-methylureidoacrylate + H2O + H(+) = (Z)-2-methylaminoacrylate + NH4(+) + CO2. Hydrolyzes ureidoacrylate to form aminoacrylate and carbamate. The carbamate hydrolyzes spontaneously, thereby releasing one of the nitrogen atoms of the pyrimidine ring as ammonia and one of its carbon atoms as CO2. The protein is Ureidoacrylate amidohydrolase RutB of Caulobacter vibrioides (strain ATCC 19089 / CIP 103742 / CB 15) (Caulobacter crescentus).